The sequence spans 1997 residues: Otoferlin (1997 aa).

Positions 1-98 constitute a C2 1 domain; sequence MALIVHLKTV…VEENRVEVTD (98 aa). Residues 1–1963 lie on the Cytoplasmic side of the membrane; sequence MALIVHLKTV…ARYFLWHTYR (1963 aa). Positions 140–167 are disordered; that stretch reads QEEKDSQETDGLLPGSRPSTRISGEKSF. C2 domains follow at residues 235–356 and 399–530; these read KRSK…HKWA and IEGN…FLPT. The segment at 643-692 is disordered; sequence VDGMSRPLRPRPRKEPGDEEEVDLIQNSSDDEGDEAGDLASVSSTPPMRP. A compositionally biased stretch (acidic residues) spans 659–679; that stretch reads GDEEEVDLIQNSSDDEGDEAG. The stretch at 791–820 forms a coiled coil; that stretch reads RERLKSCMRELESMGQQAKSLRAQVKRHTV. 2 consecutive C2 domains span residues 943 to 1068 and 1115 to 1241; these read LHSF…PPRF and RGPI…PNWN. Asp975, Asp981, Asp1037, Asp1039, and Asp1045 together coordinate Ca(2+). Disordered regions lie at residues 1253–1272, 1296–1326, and 1343–1402; these read LRNG…SMEP, DVAE…ESML, and LRQH…EKKK. Composition is skewed to acidic residues over residues 1314 to 1325 and 1352 to 1361; these read EEPEEEEPDESM and DLEEKEEMES. The span at 1370 to 1383 shows a compositional bias: basic and acidic residues; the sequence is KSKEKSRAAKEEKK. C2 domains follow at residues 1464 to 1593 and 1714 to 1865; these read LPED…ATCG and DMPA…KQCT. Ca(2+) is bound by residues Asp1508, Asp1514, Asp1563, Asp1565, Asp1571, Asp1836, Ser1839, and Asp1842. The chain crosses the membrane as a helical span at residues 1964-1984; the sequence is WLLLKFLLLFLLLLLFALFLY. Residues 1985–1997 are Extracellular-facing; the sequence is SLPGYLAKKILGA.

It belongs to the ferlin family. As to quaternary structure, interacts with SNAP25; the interaction is direct. Interacts with STX1; the interaction is direct. Interacts with RAB8B. Ca(2+) serves as cofactor. In terms of tissue distribution, isoform 1 is expressed in cochlea and brain. Expressed in the cochlear and vestibular hair cells. Expressed in both inner and outer hair cells (IHCs and OHCs) and cochlear ganglions neurons at postnatal day 2 (P2) and 6 (P6). Expressed only in IHCs at postnatal day 60 (P60) (at protein level). Strongly expressed in brain and inner ear. In the inner ear, it is mainly expressed in the cochlear IHC and vestibular type I sensory hair cells. Weakly expressed in eye, heart, skeletal muscle, liver, kidney, lung and testis.

Its subcellular location is the cytoplasmic vesicle. It localises to the secretory vesicle. The protein resides in the synaptic vesicle membrane. It is found in the basolateral cell membrane. The protein localises to the endoplasmic reticulum membrane. Its subcellular location is the golgi apparatus membrane. It localises to the presynaptic cell membrane. The protein resides in the cell membrane. Key calcium ion sensor involved in the Ca(2+)-triggered synaptic vesicle-plasma membrane fusion and in the control of neurotransmitter release at these output synapses. Interacts in a calcium-dependent manner to the presynaptic SNARE proteins at ribbon synapses of cochlear inner hair cells (IHCs) to trigger exocytosis of neurotransmitter. Also essential to synaptic exocytosis in immature outer hair cells (OHCs). May also play a role within the recycling of endosomes. In Mus musculus (Mouse), this protein is Otoferlin (Otof).